Here is a 260-residue protein sequence, read N- to C-terminus: MVLVRVLANLLMLQLSYAQKSSELIIGGDECNINEHRFLVALYTFRSRRFHCSGTLINEEWVLSAARCDRKNIRIQLGMHSTNVINEDVQTRVPKEKFSCLSSKTYTKWNKDIMLIRLKKPVNNSTHIAPVSLPSNPPTLGSVCRVMGWGTISATKETHPDVPLCANINILDYSVCRAAYARLPATSRTLCAGILEGGIDTCKGDPGGPLICNGQFQGIVSWGSDPCAKPHEPGSYTKVFDHLNWIQSIIAGNTTATCPP.

The N-terminal stretch at 1-18 (MVLVRVLANLLMLQLSYA) is a signal peptide. The propeptide occupies 19–24 (QKSSEL). The Peptidase S1 domain maps to 25–251 (IIGGDECNIN…HLNWIQSIIA (227 aa)). Disulfide bonds link cysteine 31–cysteine 165, cysteine 52–cysteine 68, cysteine 100–cysteine 258, cysteine 144–cysteine 212, cysteine 176–cysteine 191, and cysteine 202–cysteine 227. 2 N-linked (GlcNAc...) asparagine glycosylation sites follow: asparagine 123 and asparagine 124. An N-linked (GlcNAc...) asparagine glycan is attached at asparagine 253.

This sequence belongs to the peptidase S1 family. Snake venom subfamily. In terms of tissue distribution, expressed by the venom gland.

The protein resides in the secreted. Its function is as follows. Snake venom serine protease homolog that may act in the hemostasis system of the prey. In Protobothrops jerdonii (Jerdon's pitviper), this protein is Snake venom serine protease homolog.